Consider the following 427-residue polypeptide: 3-phosphoshikimate 1-carboxyvinyltransferase (427 aa).

3-phosphoshikimate contacts are provided by Lys22, Ser23, and Arg27. Lys22 contacts phosphoenolpyruvate. Residues Gly96 and Arg124 each coordinate phosphoenolpyruvate. 3-phosphoshikimate-binding residues include Ser170, Ser171, Gln172, Ser199, Asp313, Asn336, and Lys340. Gln172 is a phosphoenolpyruvate binding site. Asp313 functions as the Proton acceptor in the catalytic mechanism. Phosphoenolpyruvate is bound by residues Arg344, Arg386, and Lys411.

The protein belongs to the EPSP synthase family. As to quaternary structure, monomer.

The protein resides in the cytoplasm. It catalyses the reaction 3-phosphoshikimate + phosphoenolpyruvate = 5-O-(1-carboxyvinyl)-3-phosphoshikimate + phosphate. The protein operates within metabolic intermediate biosynthesis; chorismate biosynthesis; chorismate from D-erythrose 4-phosphate and phosphoenolpyruvate: step 6/7. Catalyzes the transfer of the enolpyruvyl moiety of phosphoenolpyruvate (PEP) to the 5-hydroxyl of shikimate-3-phosphate (S3P) to produce enolpyruvyl shikimate-3-phosphate and inorganic phosphate. The polypeptide is 3-phosphoshikimate 1-carboxyvinyltransferase (Aeromonas salmonicida).